The chain runs to 65 residues: Alpha-conotoxin Mr1.1 (65 aa).

Positions 1–21 (MGMRMMFTVFLLVVLATTVVS) are cleaved as a signal peptide. Positions 22–48 (FTSDRASDGRKAAAKDKASDLVALTVK) are excised as a propeptide. 2 cysteine pairs are disulfide-bonded: C50–C56 and C51–C64. Residues 52-54 (SHP) are ser-Xaa-Pro motif, crucial for potent interaction with nAChR. C64 is modified (cysteine amide).

Belongs to the conotoxin A superfamily. Expressed by the venom duct.

The protein localises to the secreted. Alpha-conotoxins act on postsynaptic membranes, they bind to the nicotinic acetylcholine receptors (nAChR) and thus inhibit them. This toxin potently and reversibly inhibits alpha-9-alpha-10/CHRNA9-CHRNA10 (IC(50)=92 nM (human) and IC(50)=8.3 nM (rat)) and human alpha3-beta-2/CHRNA3-CHRNB2 nAChR (IC(50)=218.9 nM). Also moderately inhibits human alpha-3-beta-4/CHRNA3-CHRNB4 (60% inhibition at 1 uM), rat alpha-7/CHRNA7 (65% inhibition at 1 uM) and rat alpha-3-beta-2/CHRNA3-CHRNB2 nAChR (50-70% inhibition at 10 uM). In two rat pain models, this toxin shows analgesic effect. The protein is Alpha-conotoxin Mr1.1 of Conus marmoreus (Marble cone).